We begin with the raw amino-acid sequence, 476 residues long: Bifunctional protein GlmU (476 aa).

The interval 1-235 (MTALDIIIMA…ALQVAGVNSP (235 aa)) is pyrophosphorylase. UDP-N-acetyl-alpha-D-glucosamine-binding positions include lysine 23, glutamine 81, 86–87 (GT), 108–110 (SGD), glycine 145, glutamate 160, and asparagine 233. Position 110 (aspartate 110) interacts with Mg(2+). A Mg(2+)-binding site is contributed by asparagine 233. The tract at residues 236–256 (AQLADLERAHQRAQAAALMEQ) is linker. Residues 257–476 (GVRLADPARF…WKRPAKQAKG (220 aa)) form an N-acetyltransferase region. Residues arginine 351 and lysine 369 each contribute to the UDP-N-acetyl-alpha-D-glucosamine site. The active-site Proton acceptor is histidine 381. Tyrosine 384 and asparagine 395 together coordinate UDP-N-acetyl-alpha-D-glucosamine. Acetyl-CoA contacts are provided by residues alanine 398, 404–405 (NY), serine 423, glycine 441, and arginine 458.

In the N-terminal section; belongs to the N-acetylglucosamine-1-phosphate uridyltransferase family. The protein in the C-terminal section; belongs to the transferase hexapeptide repeat family. Homotrimer. Mg(2+) serves as cofactor.

Its subcellular location is the cytoplasm. The enzyme catalyses alpha-D-glucosamine 1-phosphate + acetyl-CoA = N-acetyl-alpha-D-glucosamine 1-phosphate + CoA + H(+). It catalyses the reaction N-acetyl-alpha-D-glucosamine 1-phosphate + UTP + H(+) = UDP-N-acetyl-alpha-D-glucosamine + diphosphate. Its pathway is nucleotide-sugar biosynthesis; UDP-N-acetyl-alpha-D-glucosamine biosynthesis; N-acetyl-alpha-D-glucosamine 1-phosphate from alpha-D-glucosamine 6-phosphate (route II): step 2/2. It functions in the pathway nucleotide-sugar biosynthesis; UDP-N-acetyl-alpha-D-glucosamine biosynthesis; UDP-N-acetyl-alpha-D-glucosamine from N-acetyl-alpha-D-glucosamine 1-phosphate: step 1/1. It participates in bacterial outer membrane biogenesis; LPS lipid A biosynthesis. Its function is as follows. Catalyzes the last two sequential reactions in the de novo biosynthetic pathway for UDP-N-acetylglucosamine (UDP-GlcNAc). The C-terminal domain catalyzes the transfer of acetyl group from acetyl coenzyme A to glucosamine-1-phosphate (GlcN-1-P) to produce N-acetylglucosamine-1-phosphate (GlcNAc-1-P), which is converted into UDP-GlcNAc by the transfer of uridine 5-monophosphate (from uridine 5-triphosphate), a reaction catalyzed by the N-terminal domain. The chain is Bifunctional protein GlmU from Acidovorax sp. (strain JS42).